Consider the following 191-residue polypeptide: Small ribosomal subunit protein eS7 (191 aa).

Methionine 1 is modified (N-acetylmethionine).

This sequence belongs to the eukaryotic ribosomal protein eS7 family.

The polypeptide is Small ribosomal subunit protein eS7 (RPS7) (Brassica oleracea (Wild cabbage)).